A 467-amino-acid polypeptide reads, in one-letter code: uncharacterized protein (467 aa).

Lys-290 is modified (N6-(pyridoxal phosphate)lysine).

It belongs to the class-III pyridoxal-phosphate-dependent aminotransferase family. Pyridoxal 5'-phosphate serves as cofactor.

This is an uncharacterized protein from Sinorhizobium fredii (strain NBRC 101917 / NGR234).